The chain runs to 147 residues: Response regulator Rcp1 (147 aa).

The 126-residue stretch at 10–135 folds into the Response regulatory domain; the sequence is VILLVEDSKA…DLFKMVQGIE (126 aa). Asp68 is modified (4-aspartylphosphate).

Phosphorylated by Cph1.

Functionally, forms a two-component system with Cph1 in which it acts as receiver substrate. This is Response regulator Rcp1 (rcp1) from Synechocystis sp. (strain ATCC 27184 / PCC 6803 / Kazusa).